The sequence spans 214 residues: Uridine kinase (214 aa).

15 to 22 (GASASGKS) contributes to the ATP binding site.

The protein belongs to the uridine kinase family.

The protein resides in the cytoplasm. The enzyme catalyses uridine + ATP = UMP + ADP + H(+). It catalyses the reaction cytidine + ATP = CMP + ADP + H(+). It participates in pyrimidine metabolism; CTP biosynthesis via salvage pathway; CTP from cytidine: step 1/3. Its pathway is pyrimidine metabolism; UMP biosynthesis via salvage pathway; UMP from uridine: step 1/1. This Aeromonas salmonicida (strain A449) protein is Uridine kinase.